The primary structure comprises 336 residues: PTS system glucitol/sorbitol-specific EIIB component (336 aa).

One can recognise a PTS EIIB type-5 domain in the interval Lys3 to Leu195. Cys75 functions as the Phosphocysteine intermediate; for EIIB activity in the catalytic mechanism. Residue Cys75 is modified to Phosphocysteine; by EIIA. 5 consecutive transmembrane segments (helical) span residues Ile194–Gly214, Gly228–Gly248, Gly250–Ile270, Ala278–Ala298, and Val312–Ile332.

The protein localises to the cell membrane. It catalyses the reaction D-sorbitol(out) + N(pros)-phospho-L-histidyl-[protein] = D-sorbitol 6-phosphate(in) + L-histidyl-[protein]. Its function is as follows. The phosphoenolpyruvate-dependent sugar phosphotransferase system (sugar PTS), a major carbohydrate active transport system, catalyzes the phosphorylation of incoming sugar substrates concomitantly with their translocation across the cell membrane. The enzyme II complex composed of SrlA, SrlB and SrlE is involved in glucitol/sorbitol transport. This chain is PTS system glucitol/sorbitol-specific EIIB component (srlE), found in Clostridium beijerinckii (strain ATCC 51743 / NCIMB 8052) (Clostridium acetobutylicum).